A 705-amino-acid chain; its full sequence is Zinc finger protein 770 (705 aa).

Residue K16 forms a Glycyl lysine isopeptide (Lys-Gly) (interchain with G-Cter in SUMO2) linkage. C2H2-type zinc fingers lie at residues 31 to 53 (YICNICFKHFETPSKLARHYLIH), 59 to 81 (FECDVCHKNFRQLVHLERHQLTH), and 85 to 107 (FSCNICQRHFKNLKTFVKHQQLH). Residues K116, K124, and K149 each participate in a glycyl lysine isopeptide (Lys-Gly) (interchain with G-Cter in SUMO2) cross-link. 3 consecutive C2H2-type zinc fingers follow at residues 164 to 186 (HACTICGKMFPSQSKLDRHSLIH), 192 to 214 (FKCVLCSKSFRQSTHLKIHQLTH), and 220 to 242 (FQCCFCQKGFKIQSKLLKHKQIH). K266 is covalently cross-linked (Glycyl lysine isopeptide (Lys-Gly) (interchain with G-Cter in SUMO2)). The segment at 298–322 (FQCSECEECFESEQILNGHKCLPAR) adopts a C2H2-type 7; degenerate zinc-finger fold. 4 C2H2-type zinc fingers span residues 485-507 (CPCDKCDKVFPSISKLQRHYLIH), 513-535 (FDCNVCGKSFRQSAHLKRHKLTH), 640-662 (YQCSVCCKHFRSPSKLERHYLIH), and 668-690 (FECSVCGKTFRQAPHWKRHQLTH). K698 participates in a covalent cross-link: Glycyl lysine isopeptide (Lys-Gly) (interchain with G-Cter in SUMO2).

It belongs to the krueppel C2H2-type zinc-finger protein family.

The protein localises to the nucleus. Functionally, may be involved in transcriptional regulation. This is Zinc finger protein 770 (Znf770) from Mus musculus (Mouse).